The sequence spans 518 residues: Macrophage receptor MARCO (518 aa).

Residues M1–F48 lie on the Cytoplasmic side of the membrane. A helical; Signal-anchor for type II membrane protein membrane pass occupies residues C49–I69. The Extracellular portion of the chain corresponds to Q70–S518. Residues N87 and N138 are each glycosylated (N-linked (GlcNAc...) asparagine). The segment at Q147–M426 is disordered. Residues K149 to E418 enclose the Collagen-like domain. A compositionally biased stretch (low complexity) spans S154–A163. The span at K239 to D250 shows a compositional bias: basic and acidic residues. Low complexity-rich tracts occupy residues P293–P314 and R325–A344. The segment covering K410–Q421 has biased composition (basic and acidic residues). In terms of domain architecture, SRCR spans V423–S518. 3 cysteine pairs are disulfide-bonded: C446-C507, C459-C517, and C487-C497.

Homotrimer; disulfide-linked. Trimers may assemble in larger oligomers thus resulting in the creation of a large surface capable of interacting with very large ligands. Post-translationally, N-glycosylated. In terms of tissue distribution, expressed in subpopulations of macrophages in the spleen and the medullary cord of lymph nodes (at protein level).

Its subcellular location is the cell membrane. In terms of biological role, pattern recognition receptor (PRR) which binds Gram-positive and Gram-negative bacteria. Also plays a role in binding of unopsonized particles by alveolar macrophages. Binds to the secretoglobin SCGB3A2. The sequence is that of Macrophage receptor MARCO (Marco) from Mus musculus (Mouse).